Here is a 184-residue protein sequence, read N- to C-terminus: ATP synthase subunit b, chloroplastic (184 aa).

Residues 27–49 (LATNPINLSVVLGVLIFFGKGVL) traverse the membrane as a helical segment.

Belongs to the ATPase B chain family. In terms of assembly, F-type ATPases have 2 components, F(1) - the catalytic core - and F(0) - the membrane proton channel. F(1) has five subunits: alpha(3), beta(3), gamma(1), delta(1), epsilon(1). F(0) has four main subunits: a(1), b(1), b'(1) and c(10-14). The alpha and beta chains form an alternating ring which encloses part of the gamma chain. F(1) is attached to F(0) by a central stalk formed by the gamma and epsilon chains, while a peripheral stalk is formed by the delta, b and b' chains.

The protein localises to the plastid. It localises to the chloroplast thylakoid membrane. In terms of biological role, f(1)F(0) ATP synthase produces ATP from ADP in the presence of a proton or sodium gradient. F-type ATPases consist of two structural domains, F(1) containing the extramembraneous catalytic core and F(0) containing the membrane proton channel, linked together by a central stalk and a peripheral stalk. During catalysis, ATP synthesis in the catalytic domain of F(1) is coupled via a rotary mechanism of the central stalk subunits to proton translocation. Functionally, component of the F(0) channel, it forms part of the peripheral stalk, linking F(1) to F(0). In Populus alba (White poplar), this protein is ATP synthase subunit b, chloroplastic.